A 499-amino-acid chain; its full sequence is Long chain base biosynthesis protein 2b (499 aa).

A helical membrane pass occupies residues 5–25; it reads VPYVTAATTLFSFGLIFGFGH. N6-(pyridoxal phosphate)lysine is present on Lys-322.

It belongs to the class-II pyridoxal-phosphate-dependent aminotransferase family. Heterodimer with LCB1. Component of the serine palmitoyltransferase (SPT) complex, composed of LCB1 and LCB2. It depends on pyridoxal 5'-phosphate as a cofactor.

Its subcellular location is the endoplasmic reticulum membrane. It catalyses the reaction L-serine + hexadecanoyl-CoA + H(+) = 3-oxosphinganine + CO2 + CoA. It functions in the pathway lipid metabolism; sphingolipid metabolism. Functionally, serine palmitoyltransferase (SPT). The heterodimer formed with LCB1 constitutes the catalytic core. In Oryza sativa subsp. japonica (Rice), this protein is Long chain base biosynthesis protein 2b.